A 519-amino-acid polypeptide reads, in one-letter code: Ribonuclease Y 1 (519 aa).

The chain crosses the membrane as a helical span at residues 3–23; sequence VPIVILAIIAIVVGVVGGYYL. Basic and acidic residues predominate over residues 92 to 120; that stretch reads QREETLDRKDNSLEKRENSLNRRDKKLSA. The interval 92 to 124 is disordered; that stretch reads QREETLDRKDNSLEKRENSLNRRDKKLSAEEQN. Residues 209 to 272 form the KH domain; sequence TITVVTLPND…EVAKIALEKL (64 aa). The region spanning 335-428 is the HD domain; that stretch reads ALAHSIEVAK…VSTADIISAT (94 aa).

It belongs to the RNase Y family.

Its subcellular location is the cell membrane. In terms of biological role, endoribonuclease that initiates mRNA decay. The sequence is that of Ribonuclease Y 1 from Levilactobacillus brevis (strain ATCC 367 / BCRC 12310 / CIP 105137 / JCM 1170 / LMG 11437 / NCIMB 947 / NCTC 947) (Lactobacillus brevis).